Consider the following 236-residue polypeptide: Leucyl/phenylalanyl-tRNA--protein transferase (236 aa).

The protein belongs to the L/F-transferase family.

The protein resides in the cytoplasm. The enzyme catalyses N-terminal L-lysyl-[protein] + L-leucyl-tRNA(Leu) = N-terminal L-leucyl-L-lysyl-[protein] + tRNA(Leu) + H(+). It catalyses the reaction N-terminal L-arginyl-[protein] + L-leucyl-tRNA(Leu) = N-terminal L-leucyl-L-arginyl-[protein] + tRNA(Leu) + H(+). The catalysed reaction is L-phenylalanyl-tRNA(Phe) + an N-terminal L-alpha-aminoacyl-[protein] = an N-terminal L-phenylalanyl-L-alpha-aminoacyl-[protein] + tRNA(Phe). In terms of biological role, functions in the N-end rule pathway of protein degradation where it conjugates Leu, Phe and, less efficiently, Met from aminoacyl-tRNAs to the N-termini of proteins containing an N-terminal arginine or lysine. The chain is Leucyl/phenylalanyl-tRNA--protein transferase from Shewanella woodyi (strain ATCC 51908 / MS32).